Here is a 197-residue protein sequence, read N- to C-terminus: Nucleoside triphosphate pyrophosphatase (197 aa).

The active-site Proton acceptor is D71.

This sequence belongs to the Maf family. It depends on a divalent metal cation as a cofactor.

The protein resides in the cytoplasm. It catalyses the reaction a ribonucleoside 5'-triphosphate + H2O = a ribonucleoside 5'-phosphate + diphosphate + H(+). The enzyme catalyses a 2'-deoxyribonucleoside 5'-triphosphate + H2O = a 2'-deoxyribonucleoside 5'-phosphate + diphosphate + H(+). Its function is as follows. Nucleoside triphosphate pyrophosphatase. May have a dual role in cell division arrest and in preventing the incorporation of modified nucleotides into cellular nucleic acids. In Synechococcus sp. (strain JA-2-3B'a(2-13)) (Cyanobacteria bacterium Yellowstone B-Prime), this protein is Nucleoside triphosphate pyrophosphatase.